The following is a 231-amino-acid chain: Phosphatidate cytidylyltransferase (231 aa).

A run of 6 helical transmembrane segments spans residues 33–53 (FVVA…LVAI), 67–87 (IMYL…LIFL), 95–115 (WLIM…MIGG), 133–153 (WSGL…ISFI), 167–187 (IYLF…DLFI), and 206–226 (HGGV…LFFI).

The protein belongs to the CDS family.

Its subcellular location is the cell membrane. The catalysed reaction is a 1,2-diacyl-sn-glycero-3-phosphate + CTP + H(+) = a CDP-1,2-diacyl-sn-glycerol + diphosphate. Its pathway is phospholipid metabolism; CDP-diacylglycerol biosynthesis; CDP-diacylglycerol from sn-glycerol 3-phosphate: step 3/3. This chain is Phosphatidate cytidylyltransferase (cdsA), found in Rickettsia bellii (strain RML369-C).